The primary structure comprises 227 residues: Monoamine regulon transcriptional regulator (227 aa).

Residues 155 to 220 form the HTH luxR-type domain; it reads EDDLPAILTA…ELVSRTWMPA (66 aa). The segment at residues 179–198 is a DNA-binding region (H-T-H motif); the sequence is NKLIARQLDISLSTVKTHLR.

Positive regulatory protein for the induction of arylsulfatase synthesis (maoA), tyramine oxidase (tynA), maoC, maoE/F operon, and atsB/A operon which are all regulated by monoamines, and included under the common term of monoamine regulon. The sequence is that of Monoamine regulon transcriptional regulator (moaR) from Klebsiella aerogenes (Enterobacter aerogenes).